The sequence spans 467 residues: Methylenetetrahydrofolate--tRNA-(uracil-5-)-methyltransferase TrmFO (467 aa).

10 to 15 (GGGMAG) contributes to the FAD binding site.

It belongs to the MnmG family. TrmFO subfamily. Requires FAD as cofactor.

It localises to the cytoplasm. The enzyme catalyses uridine(54) in tRNA + (6R)-5,10-methylene-5,6,7,8-tetrahydrofolate + NADH + H(+) = 5-methyluridine(54) in tRNA + (6S)-5,6,7,8-tetrahydrofolate + NAD(+). It carries out the reaction uridine(54) in tRNA + (6R)-5,10-methylene-5,6,7,8-tetrahydrofolate + NADPH + H(+) = 5-methyluridine(54) in tRNA + (6S)-5,6,7,8-tetrahydrofolate + NADP(+). Functionally, catalyzes the folate-dependent formation of 5-methyl-uridine at position 54 (M-5-U54) in all tRNAs. The protein is Methylenetetrahydrofolate--tRNA-(uracil-5-)-methyltransferase TrmFO of Hyphomonas neptunium (strain ATCC 15444).